The following is a 119-amino-acid chain: Phosphoribosyl-AMP cyclohydrolase (119 aa).

D72 is a Mg(2+) binding site. C73 contacts Zn(2+). D74 and D76 together coordinate Mg(2+). Zn(2+) contacts are provided by C89 and C96.

It belongs to the PRA-CH family. In terms of assembly, homodimer. Mg(2+) is required as a cofactor. Requires Zn(2+) as cofactor.

It localises to the cytoplasm. It carries out the reaction 1-(5-phospho-beta-D-ribosyl)-5'-AMP + H2O = 1-(5-phospho-beta-D-ribosyl)-5-[(5-phospho-beta-D-ribosylamino)methylideneamino]imidazole-4-carboxamide. It participates in amino-acid biosynthesis; L-histidine biosynthesis; L-histidine from 5-phospho-alpha-D-ribose 1-diphosphate: step 3/9. Functionally, catalyzes the hydrolysis of the adenine ring of phosphoribosyl-AMP. This is Phosphoribosyl-AMP cyclohydrolase from Methanocella arvoryzae (strain DSM 22066 / NBRC 105507 / MRE50).